A 537-amino-acid chain; its full sequence is Probable E3 ubiquitin-protein ligase ARI3 (537 aa).

The disordered stretch occupies residues 1 to 30; the sequence is MDDDYMMLDDDYGEEEDENYSEDDNYSEAE. The segment at 117 to 331 is TRIAD supradomain; it reads KTMKCDVCME…IAGHSCGRYK (215 aa). Zn(2+) is bound by residues C121, C124, C139, H141, C144, C147, C166, C171, C210, C216, C234, C236, C241, C244, H249, C254, C281, and C284. An RING-type 1 zinc finger spans residues 121–171; the sequence is CDVCMEDDLPSNVMTRMECGHRFCNDCWIGHFTVKINEGESKRILCMAHEC. The IBR-type zinc-finger motif lies at 190-254; sequence DRYDRFLIES…LSESHSPCSC (65 aa). The RING-type 2; atypical zinc-finger motif lies at 281–309; that stretch reads CPKCSKPIQKRDGCNLMTCKCGQHFCWLC. Residue C294 is part of the active site. Zn(2+) contacts are provided by C299, C301, C306, C309, H317, and C327.

This sequence belongs to the RBR family. Ariadne subfamily. It depends on Zn(2+) as a cofactor. In terms of tissue distribution, ubiquitous.

The catalysed reaction is [E2 ubiquitin-conjugating enzyme]-S-ubiquitinyl-L-cysteine + [acceptor protein]-L-lysine = [E2 ubiquitin-conjugating enzyme]-L-cysteine + [acceptor protein]-N(6)-ubiquitinyl-L-lysine.. It participates in protein modification; protein ubiquitination. Its function is as follows. Might act as an E3 ubiquitin-protein ligase, or as part of E3 complex, which accepts ubiquitin from specific E2 ubiquitin-conjugating enzymes and then transfers it to substrates. The chain is Probable E3 ubiquitin-protein ligase ARI3 (ARI3) from Arabidopsis thaliana (Mouse-ear cress).